Here is a 1372-residue protein sequence, read N- to C-terminus: DNA-directed RNA polymerase subunit beta (1372 aa).

Belongs to the RNA polymerase beta chain family. In terms of assembly, the RNAP catalytic core consists of 2 alpha, 1 beta, 1 beta' and 1 omega subunit. When a sigma factor is associated with the core the holoenzyme is formed, which can initiate transcription.

It catalyses the reaction RNA(n) + a ribonucleoside 5'-triphosphate = RNA(n+1) + diphosphate. DNA-dependent RNA polymerase catalyzes the transcription of DNA into RNA using the four ribonucleoside triphosphates as substrates. This is DNA-directed RNA polymerase subunit beta from Psychrobacter sp. (strain PRwf-1).